The following is a 159-amino-acid chain: 6,7-dimethyl-8-ribityllumazine synthase (159 aa).

Residues W26, 57–59 (ALE), and 79–81 (CVV) contribute to the 5-amino-6-(D-ribitylamino)uracil site. Residue 84 to 85 (GT) participates in (2S)-2-hydroxy-3-oxobutyl phosphate binding. The Proton donor role is filled by H87. N112 lines the 5-amino-6-(D-ribitylamino)uracil pocket. R126 contacts (2S)-2-hydroxy-3-oxobutyl phosphate.

The protein belongs to the DMRL synthase family.

It catalyses the reaction (2S)-2-hydroxy-3-oxobutyl phosphate + 5-amino-6-(D-ribitylamino)uracil = 6,7-dimethyl-8-(1-D-ribityl)lumazine + phosphate + 2 H2O + H(+). Its pathway is cofactor biosynthesis; riboflavin biosynthesis; riboflavin from 2-hydroxy-3-oxobutyl phosphate and 5-amino-6-(D-ribitylamino)uracil: step 1/2. Catalyzes the formation of 6,7-dimethyl-8-ribityllumazine by condensation of 5-amino-6-(D-ribitylamino)uracil with 3,4-dihydroxy-2-butanone 4-phosphate. This is the penultimate step in the biosynthesis of riboflavin. This chain is 6,7-dimethyl-8-ribityllumazine synthase, found in Corynebacterium glutamicum (strain ATCC 13032 / DSM 20300 / JCM 1318 / BCRC 11384 / CCUG 27702 / LMG 3730 / NBRC 12168 / NCIMB 10025 / NRRL B-2784 / 534).